The following is a 209-amino-acid chain: CASP-like protein 1A1 (209 aa).

The disordered stretch occupies residues 1–26 (MEEAKHNEAEEAQGIEAREAKQIEAG). The Cytoplasmic segment spans residues 1 to 49 (MEEAKHNEAEEAQGIEAREAKQIEAGETSRSSRKLITFEPKLVINKGIS). A helical membrane pass occupies residues 50-70 (VLGFVLRLFAVFGTIGSALAM). Residues 71–95 (GTTHESVVSLSQLVLLKVKYSDLPT) lie on the Extracellular side of the membrane. The helical transmembrane segment at 96 to 116 (LMFFVVANAISGGYLVLSLPV) threads the bilayer. Residues 117–130 (SIFHIFSTQAKTSR) are Cytoplasmic-facing. Residues 131–151 (IILLVVDTVMLALVSSGASAA) form a helical membrane-spanning segment. Over 152-183 (TATVYLAHEGNTTANWPPICQQFDGFCERISG) the chain is Extracellular. Asn-162 carries an N-linked (GlcNAc...) asparagine glycan. Residues 184–204 (SLIGSFCAVILLMLIVINSAI) form a helical membrane-spanning segment. The Cytoplasmic segment spans residues 205-209 (SLSRH).

It belongs to the Casparian strip membrane proteins (CASP) family. Homodimer and heterodimers. As to expression, expressed in the root endodermis.

It localises to the cell membrane. This Arabidopsis thaliana (Mouse-ear cress) protein is CASP-like protein 1A1.